The chain runs to 463 residues: Probable diacyglycerol O-acyltransferase tgs1 (463 aa).

Met-1 bears the N-acetylmethionine mark. The Proton acceptor role is filled by His-137.

This sequence belongs to the long-chain O-acyltransferase family.

The enzyme catalyses an acyl-CoA + a 1,2-diacyl-sn-glycerol = a triacyl-sn-glycerol + CoA. It catalyses the reaction di-(9Z)-octadecenoylglycerol + (9Z)-octadecenoyl-CoA = 1,2,3-tri-(9Z-octadecenoyl)-glycerol + CoA. It participates in glycerolipid metabolism; triacylglycerol biosynthesis. Its function is as follows. Catalyzes the terminal and only committed step in triacylglycerol synthesis by using diacylglycerol and fatty acyl CoA as substrates. Required for storage lipid synthesis. In terms of biological role, upon expression in E.coli functions as a triacylglycerol synthase, making triacylglycerol (TG) from diolein and long-chain fatty acyl-CoA. Prefers C(26:0)-CoA over C(18:1)-CoA. TG synthesis activity increases in M.tuberculosis upon oxygen depletion and NO treatment, with concomitant accumulation of TG in inclusion bodies. As disruption of the gene encoding this protein obviates TG synthesis this seems to be the major enzyme involved in production of TG. Has no wax synthase activity to produce wax esters. The protein is Probable diacyglycerol O-acyltransferase tgs1 (tgs1) of Mycobacterium tuberculosis (strain ATCC 25618 / H37Rv).